We begin with the raw amino-acid sequence, 81 residues long: ATP synthase subunit C, plastid (81 aa).

2 consecutive transmembrane segments (helical) span residues 3–23 (PIIS…ASIG) and 57–77 (LAFM…LLFA).

It belongs to the ATPase C chain family. As to quaternary structure, F-type ATPases have 2 components, F(1) - the catalytic core - and F(0) - the membrane proton channel. F(1) has five subunits: alpha(3), beta(3), gamma(1), delta(1), epsilon(1). F(0) has four main subunits: a(1), b(1), b'(1) and c(10-14). The alpha and beta chains form an alternating ring which encloses part of the gamma chain. F(1) is attached to F(0) by a central stalk formed by the gamma and epsilon chains, while a peripheral stalk is formed by the delta, b and b' chains.

The protein localises to the plastid membrane. Functionally, f(1)F(0) ATP synthase produces ATP from ADP in the presence of a proton or sodium gradient. F-type ATPases consist of two structural domains, F(1) containing the extramembraneous catalytic core and F(0) containing the membrane proton channel, linked together by a central stalk and a peripheral stalk. During catalysis, ATP synthesis in the catalytic domain of F(1) is coupled via a rotary mechanism of the central stalk subunits to proton translocation. In terms of biological role, key component of the F(0) channel; it plays a direct role in translocation across the membrane. A homomeric c-ring of between 10-14 subunits forms the central stalk rotor element with the F(1) delta and epsilon subunits. This chain is ATP synthase subunit C, plastid, found in Cuscuta gronovii (Common dodder).